The following is a 252-amino-acid chain: MIFFDMMHNKASKHGGAVYSLLGNHELMNTQGNFDYVSYENYHNFDYDSPSGEKYTGSLGRQNVFKPGSNFVKKMACNRLSVLVIGSTMFTHAGVLPVLARKLDKLDLDSNKKLEYLNMIVRKWLLNKLSGKQDEEYKSLFINDTKISPFWNRIYGMIPNNTSIDSDQCFNSVKKTLQVFKIGKIVVGHTPQLFTNKDGINGTCYERGEDNKLYRIDGGFADAFNAFNKKHVVQVLEITDDKYFRIITSKKN.

The chain crosses the membrane as a helical span at residues 80–100; that stretch reads LSVLVIGSTMFTHAGVLPVLA.

The protein localises to the host membrane. It localises to the virion. This is an uncharacterized protein from Acanthamoeba polyphaga mimivirus (APMV).